A 253-amino-acid chain; its full sequence is Ubiquinone biosynthesis O-methyltransferase (253 aa).

S-adenosyl-L-methionine-binding residues include Arg-47, Gly-78, Asp-99, and Met-141.

The protein belongs to the methyltransferase superfamily. UbiG/COQ3 family.

The catalysed reaction is a 3-demethylubiquinol + S-adenosyl-L-methionine = a ubiquinol + S-adenosyl-L-homocysteine + H(+). It catalyses the reaction a 3-(all-trans-polyprenyl)benzene-1,2-diol + S-adenosyl-L-methionine = a 2-methoxy-6-(all-trans-polyprenyl)phenol + S-adenosyl-L-homocysteine + H(+). It functions in the pathway cofactor biosynthesis; ubiquinone biosynthesis. In terms of biological role, O-methyltransferase that catalyzes the 2 O-methylation steps in the ubiquinone biosynthetic pathway. The chain is Ubiquinone biosynthesis O-methyltransferase from Rhodopseudomonas palustris (strain HaA2).